The primary structure comprises 72 residues: uncharacterized protein (72 aa).

At 1–12 (MSKHKHEWTESV) the chain is on the cytoplasmic side. A helical membrane pass occupies residues 13 to 32 (ANSGPASILSYCASSILMTV). The Lumenal portion of the chain corresponds to 33–46 (TNKFVVNLDNFNMN). A helical transmembrane segment spans residues 47 to 69 (FVMLFVQSLVCTVTLCILRIVGV). The Cytoplasmic portion of the chain corresponds to 70–72 (ANF).

It belongs to the TPT transporter family. SLC35D subfamily.

Its subcellular location is the membrane. This is an uncharacterized protein from Saccharomyces cerevisiae (strain RM11-1a) (Baker's yeast).